Here is a 458-residue protein sequence, read N- to C-terminus: Divalent metal cation transporter MntH (458 aa).

The next 11 helical transmembrane spans lie at 38–58, 76–96, 119–139, 151–171, 180–200, 223–243, 275–295, 315–335, 370–390, 393–413, and 437–457; these read GFWK…VGYM, SLLS…AMAA, GGFL…AEII, MPLI…LLLM, AVVA…VILA, MLYL…LFLG, LTMA…LFFG, IVGA…LLAS, LMSV…EAKI, LLTF…IPLV, and FISG…LGFV.

The protein belongs to the NRAMP family.

The protein resides in the cell membrane. In terms of biological role, h(+)-stimulated, divalent metal cation uptake system. This chain is Divalent metal cation transporter MntH, found in Lacticaseibacillus paracasei (strain ATCC 334 / BCRC 17002 / CCUG 31169 / CIP 107868 / KCTC 3260 / NRRL B-441) (Lactobacillus paracasei).